A 453-amino-acid polypeptide reads, in one-letter code: ACT domain-containing protein ACR3 (453 aa).

4 consecutive ACT domains span residues 37–112 (LVKV…SASQ), 130–212 (SIEI…KFAR), 266–341 (VINV…RVSE), and 344–423 (SLEL…VPSR).

As to expression, expressed in roots, cotyledons, rosette and cauline leaves, sepals, style, and pedicels and tips of young developing siliques.

Its function is as follows. May bind amino acids. This chain is ACT domain-containing protein ACR3, found in Arabidopsis thaliana (Mouse-ear cress).